Consider the following 20-residue polypeptide: Alkaline phosphatase (20 aa).

As to expression, expressed by the venom gland.

The protein localises to the secreted. The catalysed reaction is a phosphate monoester + H2O = an alcohol + phosphate. Functionally, has hemorrhagic activity. This is Alkaline phosphatase from Deinagkistrodon acutus (Hundred-pace snake).